The chain runs to 530 residues: T-complex protein 1 subunit zeta (530 aa).

Glycine 38 is a binding site for ADP. Residue glycine 38 coordinates ATP. Aspartate 89 serves as a coordination point for Mg(2+). Glycine 90, threonine 91, threonine 92, serine 93, threonine 157, lysine 158, and alanine 410 together coordinate ADP. 3 residues coordinate ATP: glycine 90, threonine 91, and threonine 92. Residues alanine 410, glycine 411, aspartate 495, and lysine 500 each contribute to the ATP site. Aspartate 495 contacts ADP.

As to quaternary structure, component of the chaperonin-containing T-complex (TRiC), a hexadecamer composed of two identical back-to-back stacked rings enclosing a protein folding chamber. Each ring is made up of eight different subunits: TCP1/CCT1, CCT2, CCT3, CCT4, CCT5, CCT6A/CCT6, CCT7, CCT8. Interacts with PACRG.

The protein localises to the cytoplasm. It carries out the reaction ATP + H2O = ADP + phosphate + H(+). In terms of biological role, component of the chaperonin-containing T-complex (TRiC), a molecular chaperone complex that assists the folding of actin, tubulin and other proteins upon ATP hydrolysis. The protein is T-complex protein 1 subunit zeta of Gallus gallus (Chicken).